Here is a 267-residue protein sequence, read N- to C-terminus: Pyrroline-5-carboxylate reductase (267 aa).

The protein belongs to the pyrroline-5-carboxylate reductase family.

The protein resides in the cytoplasm. It catalyses the reaction L-proline + NADP(+) = (S)-1-pyrroline-5-carboxylate + NADPH + 2 H(+). The enzyme catalyses L-proline + NAD(+) = (S)-1-pyrroline-5-carboxylate + NADH + 2 H(+). It participates in amino-acid biosynthesis; L-proline biosynthesis; L-proline from L-glutamate 5-semialdehyde: step 1/1. In terms of biological role, catalyzes the reduction of 1-pyrroline-5-carboxylate (PCA) to L-proline. This is Pyrroline-5-carboxylate reductase from Synechocystis sp. (strain ATCC 27184 / PCC 6803 / Kazusa).